Reading from the N-terminus, the 131-residue chain is Translation initiation factor 5A (131 aa).

A Hypusine modification is found at Lys36.

The protein belongs to the eIF-5A family.

It is found in the cytoplasm. Functions by promoting the formation of the first peptide bond. This is Translation initiation factor 5A from Saccharolobus solfataricus (strain ATCC 35092 / DSM 1617 / JCM 11322 / P2) (Sulfolobus solfataricus).